The sequence spans 1517 residues: DNA-directed RNA polymerase subunit beta' (1517 aa).

The Zn(2+) site is built by Cys71, Cys73, Cys86, and Cys89. Residues Asp482, Asp484, and Asp486 each contribute to the Mg(2+) site. 4 residues coordinate Zn(2+): Cys812, Cys886, Cys893, and Cys896.

Belongs to the RNA polymerase beta' chain family. The RNAP catalytic core consists of 2 alpha, 1 beta, 1 beta' and 1 omega subunit. When a sigma factor is associated with the core the holoenzyme is formed, which can initiate transcription. Mg(2+) is required as a cofactor. It depends on Zn(2+) as a cofactor.

It catalyses the reaction RNA(n) + a ribonucleoside 5'-triphosphate = RNA(n+1) + diphosphate. Functionally, DNA-dependent RNA polymerase catalyzes the transcription of DNA into RNA using the four ribonucleoside triphosphates as substrates. The protein is DNA-directed RNA polymerase subunit beta' of Campylobacter jejuni subsp. jejuni serotype O:2 (strain ATCC 700819 / NCTC 11168).